The primary structure comprises 385 residues: Transcription termination factor 2, mitochondrial (385 aa).

The N-terminal 35 residues, 1 to 35 (MLWKLLLRSQSCRLCSFRKMRSPPKYRPFLACFTY), are a transit peptide targeting the mitochondrion.

The protein belongs to the mTERF family. Monomer. As to expression, expressed in skeletal muscle, heart, liver and pancreas.

It is found in the mitochondrion. The protein localises to the mitochondrion matrix. It localises to the mitochondrion nucleoid. Binds mitochondrial DNA and plays a role in the regulation of transcription of mitochondrial mRNA and rRNA species. This chain is Transcription termination factor 2, mitochondrial (MTERF2), found in Homo sapiens (Human).